Reading from the N-terminus, the 212-residue chain is Pyridoxine/pyridoxamine 5'-phosphate oxidase (212 aa).

Positions 1–20 (MSDSAMEPQNPLTSGDFTAA) are disordered. FMN is bound by residues 59 to 64 (RMVLLK), 74 to 75 (YT), Lys81, and Gln103. Lys64 contacts substrate. Substrate contacts are provided by Tyr121, Arg125, and Ser129. FMN-binding positions include 138–139 (QS) and Trp183. 189–191 (RLH) contributes to the substrate binding site. Position 193 (Arg193) interacts with FMN.

It belongs to the pyridoxamine 5'-phosphate oxidase family. In terms of assembly, homodimer. The cofactor is FMN.

The catalysed reaction is pyridoxamine 5'-phosphate + O2 + H2O = pyridoxal 5'-phosphate + H2O2 + NH4(+). It catalyses the reaction pyridoxine 5'-phosphate + O2 = pyridoxal 5'-phosphate + H2O2. It participates in cofactor metabolism; pyridoxal 5'-phosphate salvage; pyridoxal 5'-phosphate from pyridoxamine 5'-phosphate: step 1/1. The protein operates within cofactor metabolism; pyridoxal 5'-phosphate salvage; pyridoxal 5'-phosphate from pyridoxine 5'-phosphate: step 1/1. Its function is as follows. Catalyzes the oxidation of either pyridoxine 5'-phosphate (PNP) or pyridoxamine 5'-phosphate (PMP) into pyridoxal 5'-phosphate (PLP). The polypeptide is Pyridoxine/pyridoxamine 5'-phosphate oxidase (Azorhizobium caulinodans (strain ATCC 43989 / DSM 5975 / JCM 20966 / LMG 6465 / NBRC 14845 / NCIMB 13405 / ORS 571)).